Reading from the N-terminus, the 30-residue chain is Trypsin inhibitor 3 (30 aa).

Intrachain disulfides connect Cys-4/Cys-21, Cys-11/Cys-23, and Cys-17/Cys-29.

This sequence belongs to the protease inhibitor I7 (squash-type serine protease inhibitor) family.

The protein resides in the secreted. Inhibits trypsin. This is Trypsin inhibitor 3 from Momordica charantia (Bitter gourd).